Consider the following 275-residue polypeptide: Dermonecrotic toxin LruSicTox-alphaIV1 (275 aa).

The active site involves H5. Residues E25 and D27 each contribute to the Mg(2+) site. H41 (nucleophile) is an active-site residue. 2 disulfides stabilise this stretch: C45-C51 and C47-C192. D85 is a Mg(2+) binding site.

This sequence belongs to the arthropod phospholipase D family. Class II subfamily. The cofactor is Mg(2+). In terms of tissue distribution, expressed by the venom gland.

It localises to the secreted. It catalyses the reaction an N-(acyl)-sphingosylphosphocholine = an N-(acyl)-sphingosyl-1,3-cyclic phosphate + choline. It carries out the reaction an N-(acyl)-sphingosylphosphoethanolamine = an N-(acyl)-sphingosyl-1,3-cyclic phosphate + ethanolamine. The enzyme catalyses a 1-acyl-sn-glycero-3-phosphocholine = a 1-acyl-sn-glycero-2,3-cyclic phosphate + choline. The catalysed reaction is a 1-acyl-sn-glycero-3-phosphoethanolamine = a 1-acyl-sn-glycero-2,3-cyclic phosphate + ethanolamine. Dermonecrotic toxins cleave the phosphodiester linkage between the phosphate and headgroup of certain phospholipids (sphingolipid and lysolipid substrates), forming an alcohol (often choline) and a cyclic phosphate. This toxin acts on sphingomyelin (SM). It may also act on ceramide phosphoethanolamine (CPE), lysophosphatidylcholine (LPC) and lysophosphatidylethanolamine (LPE), but not on lysophosphatidylserine (LPS), and lysophosphatidylglycerol (LPG). It acts by transphosphatidylation, releasing exclusively cyclic phosphate products as second products. Induces dermonecrosis, hemolysis, increased vascular permeability, edema, inflammatory response, and platelet aggregation. This chain is Dermonecrotic toxin LruSicTox-alphaIV1, found in Loxosceles rufescens (Mediterranean recluse spider).